The sequence spans 101 residues: uncharacterized protein (101 aa).

Its subcellular location is the cytoplasm. This is an uncharacterized protein from Saccharomyces cerevisiae (strain ATCC 204508 / S288c) (Baker's yeast).